Consider the following 395-residue polypeptide: S-adenosylmethionine synthase (395 aa).

H14 is a binding site for ATP. D16 provides a ligand contact to Mg(2+). E42 serves as a coordination point for K(+). E55 and Q98 together coordinate L-methionine. Residues Q98–K108 are flexible loop. Residues D174–K176, R240–F241, D249, R255–K256, A272, and K276 contribute to the ATP site. D249 is an L-methionine binding site. Residue K280 coordinates L-methionine.

This sequence belongs to the AdoMet synthase family. In terms of assembly, homotetramer; dimer of dimers. Mg(2+) serves as cofactor. It depends on K(+) as a cofactor.

It localises to the cytoplasm. The enzyme catalyses L-methionine + ATP + H2O = S-adenosyl-L-methionine + phosphate + diphosphate. It functions in the pathway amino-acid biosynthesis; S-adenosyl-L-methionine biosynthesis; S-adenosyl-L-methionine from L-methionine: step 1/1. Functionally, catalyzes the formation of S-adenosylmethionine (AdoMet) from methionine and ATP. The overall synthetic reaction is composed of two sequential steps, AdoMet formation and the subsequent tripolyphosphate hydrolysis which occurs prior to release of AdoMet from the enzyme. This chain is S-adenosylmethionine synthase, found in Caldanaerobacter subterraneus subsp. tengcongensis (strain DSM 15242 / JCM 11007 / NBRC 100824 / MB4) (Thermoanaerobacter tengcongensis).